A 396-amino-acid polypeptide reads, in one-letter code: Elongation factor Tu 1 (396 aa).

The tr-type G domain occupies 10 to 206 (KPHVNIGTIG…AVDEYIPTPE (197 aa)). Residues 19 to 26 (GHVDHGKT) are G1. 19–26 (GHVDHGKT) is a GTP binding site. Residue Thr26 coordinates Mg(2+). The tract at residues 60–64 (GITIN) is G2. The G3 stretch occupies residues 81 to 84 (DCPG). GTP is bound by residues 81-85 (DCPGH) and 136-139 (NKVD). The segment at 136-139 (NKVD) is G4. The tract at residues 174–176 (SAL) is G5.

This sequence belongs to the TRAFAC class translation factor GTPase superfamily. Classic translation factor GTPase family. EF-Tu/EF-1A subfamily. Monomer.

The protein resides in the cytoplasm. It catalyses the reaction GTP + H2O = GDP + phosphate + H(+). In terms of biological role, GTP hydrolase that promotes the GTP-dependent binding of aminoacyl-tRNA to the A-site of ribosomes during protein biosynthesis. The sequence is that of Elongation factor Tu 1 from Hyphomonas neptunium (strain ATCC 15444).